Here is a 998-residue protein sequence, read N- to C-terminus: Mis18-binding protein 1 (998 aa).

Residue Lys7 forms a Glycyl lysine isopeptide (Lys-Gly) (interchain with G-Cter in SUMO2) linkage. A phosphoserine mark is found at Ser9, Ser109, and Ser134. The tract at residues 122–153 (QRDKQEQLTRSSSMLGSPQGEHTKDFPPNTDK) is disordered. The segment covering 142–153 (EHTKDFPPNTDK) has biased composition (basic and acidic residues). 2 positions are modified to phosphoserine: Ser169 and Ser258. In terms of domain architecture, SANTA spans 336–422 (VHLQEWMIKV…MFGFPHNWKE (87 aa)). 2 disordered regions span residues 438–460 (KTRQ…AEDK) and 476–502 (DNSL…KERR). Residues 488-497 (PLNSLEQPTS) are compositionally biased toward polar residues. A phosphothreonine mark is found at Thr516 and Thr578. Residues Ser638 and Ser639 each carry the phosphoserine modification. The tract at residues 638 to 660 (SSEENEVEIKSRTRARNTKERLN) is disordered. Over residues 644–660 (VEIKSRTRARNTKERLN) the composition is skewed to basic and acidic residues. Position 688 is a phosphothreonine (Thr688). Lys707 is covalently cross-linked (Glycyl lysine isopeptide (Lys-Gly) (interchain with G-Cter in SUMO2)). Ser726 is subject to Phosphoserine. The SANT domain occupies 741-796 (TDDEEWSEQELQKLHCAFTSLPKHKPGFWSDVAMAVGSRTADECQKKYTEEPQGQG). A Glycyl lysine isopeptide (Lys-Gly) (interchain with G-Cter in SUMO2) cross-link involves residue Lys765. The disordered stretch occupies residues 784 to 821 (CQKKYTEEPQGQGSRKHGSKKKQANKVQNGEKDSADAK). The segment covering 797 to 807 (SRKHGSKKKQA) has biased composition (basic residues). Positions 812–821 (NGEKDSADAK) are enriched in basic and acidic residues. Glycyl lysine isopeptide (Lys-Gly) (interchain with G-Cter in SUMO2) cross-links involve residues Lys821, Lys828, and Lys847. Phosphoserine is present on Ser872. Lys948 is covalently cross-linked (Glycyl lysine isopeptide (Lys-Gly) (interchain with G-Cter in SUMO2)). Residues Ser955 and Ser985 each carry the phosphoserine modification. Residues 976 to 998 (SKYFIDDTESDEEEKDYYFSNSD) are disordered. Residues 981–990 (DDTESDEEEK) show a composition bias toward acidic residues.

Interacts with SP1. Interacts with MIS18A. Identified in a complex containing MIS18A, OIP5/MIS18B, MIS18BP1, RBBP7 and RBBP4. Interacts with KAT7/HBO1. Interacts (via N-terminus) with FLNA (via N-terminus).

The protein resides in the nucleus. It is found in the chromosome. It localises to the centromere. Functionally, required for recruitment of CENPA to centromeres and normal chromosome segregation during mitosis. The polypeptide is Mis18-binding protein 1 (Mis18bp1) (Mus musculus (Mouse)).